Here is a 477-residue protein sequence, read N- to C-terminus: Pentatricopeptide repeat-containing protein At1g55630 (477 aa).

PPR repeat units follow at residues 151-185, 186-220, 221-255, 256-290, 291-325, 326-360, 361-395, 396-430, and 431-465; these read TANC…GYPT, TACT…NYRP, YKHS…GFTP, DVLT…GFSP, DLYT…GVEP, GVIH…GCTP, DVVC…GQLP, NVFT…GCNP, and NFVV…GHYV.

It belongs to the PPR family. P subfamily.

This is Pentatricopeptide repeat-containing protein At1g55630 from Arabidopsis thaliana (Mouse-ear cress).